Here is a 122-residue protein sequence, read N- to C-terminus: Large ribosomal subunit protein bL12 (122 aa).

The protein belongs to the bacterial ribosomal protein bL12 family. In terms of assembly, homodimer. Part of the ribosomal stalk of the 50S ribosomal subunit. Forms a multimeric L10(L12)X complex, where L10 forms an elongated spine to which 2 to 4 L12 dimers bind in a sequential fashion. Binds GTP-bound translation factors.

Functionally, forms part of the ribosomal stalk which helps the ribosome interact with GTP-bound translation factors. Is thus essential for accurate translation. The chain is Large ribosomal subunit protein bL12 from Pseudomonas aeruginosa (strain LESB58).